Here is a 352-residue protein sequence, read N- to C-terminus: DNA polymerase IV (352 aa).

In terms of domain architecture, UmuC spans 7 to 187 (IIHIDMDCFY…LSLKKIPGIG (181 aa)). Mg(2+)-binding residues include aspartate 11 and aspartate 105. Glutamate 106 is an active-site residue.

The protein belongs to the DNA polymerase type-Y family. As to quaternary structure, monomer. The cofactor is Mg(2+).

Its subcellular location is the cytoplasm. The catalysed reaction is DNA(n) + a 2'-deoxyribonucleoside 5'-triphosphate = DNA(n+1) + diphosphate. Its function is as follows. Poorly processive, error-prone DNA polymerase involved in untargeted mutagenesis. Copies undamaged DNA at stalled replication forks, which arise in vivo from mismatched or misaligned primer ends. These misaligned primers can be extended by PolIV. Exhibits no 3'-5' exonuclease (proofreading) activity. May be involved in translesional synthesis, in conjunction with the beta clamp from PolIII. The protein is DNA polymerase IV of Colwellia psychrerythraea (strain 34H / ATCC BAA-681) (Vibrio psychroerythus).